The following is a 409-amino-acid chain: Argininosuccinate synthase (409 aa).

Residues 8 to 16 (AYSGGLDTS) and A34 each bind ATP. Y85 provides a ligand contact to L-citrulline. G115 is a binding site for ATP. Residues T117, N121, and D122 each contribute to the L-aspartate site. L-citrulline is bound at residue N121. L-citrulline-binding residues include R125, S178, S187, E268, and Y280.

Belongs to the argininosuccinate synthase family. Type 1 subfamily. As to quaternary structure, homotetramer.

It is found in the cytoplasm. It catalyses the reaction L-citrulline + L-aspartate + ATP = 2-(N(omega)-L-arginino)succinate + AMP + diphosphate + H(+). The protein operates within amino-acid biosynthesis; L-arginine biosynthesis; L-arginine from L-ornithine and carbamoyl phosphate: step 2/3. In Thermotoga sp. (strain RQ2), this protein is Argininosuccinate synthase.